Consider the following 339-residue polypeptide: Biotin synthase (339 aa).

The Radical SAM core domain maps to 47-276 (FYGKKVKLNM…SKEIRISGGR (230 aa)). C65, C69, and C72 together coordinate [4Fe-4S] cluster. [2Fe-2S] cluster is bound by residues C109, C141, C201, and R271.

The protein belongs to the radical SAM superfamily. Biotin synthase family. In terms of assembly, homodimer. [4Fe-4S] cluster serves as cofactor. [2Fe-2S] cluster is required as a cofactor.

The catalysed reaction is (4R,5S)-dethiobiotin + (sulfur carrier)-SH + 2 reduced [2Fe-2S]-[ferredoxin] + 2 S-adenosyl-L-methionine = (sulfur carrier)-H + biotin + 2 5'-deoxyadenosine + 2 L-methionine + 2 oxidized [2Fe-2S]-[ferredoxin]. The protein operates within cofactor biosynthesis; biotin biosynthesis; biotin from 7,8-diaminononanoate: step 2/2. Its function is as follows. Catalyzes the conversion of dethiobiotin (DTB) to biotin by the insertion of a sulfur atom into dethiobiotin via a radical-based mechanism. This is Biotin synthase from Bacillus velezensis (strain DSM 23117 / BGSC 10A6 / LMG 26770 / FZB42) (Bacillus amyloliquefaciens subsp. plantarum).